Here is a 93-residue protein sequence, read N- to C-terminus: Putative regulatory protein LA_2599 (93 aa).

Belongs to the RemA family.

This Leptospira interrogans serogroup Icterohaemorrhagiae serovar Lai (strain 56601) protein is Putative regulatory protein LA_2599.